Reading from the N-terminus, the 234-residue chain is Leucyl/phenylalanyl-tRNA--protein transferase (234 aa).

This sequence belongs to the L/F-transferase family.

Its subcellular location is the cytoplasm. It carries out the reaction N-terminal L-lysyl-[protein] + L-leucyl-tRNA(Leu) = N-terminal L-leucyl-L-lysyl-[protein] + tRNA(Leu) + H(+). The catalysed reaction is N-terminal L-arginyl-[protein] + L-leucyl-tRNA(Leu) = N-terminal L-leucyl-L-arginyl-[protein] + tRNA(Leu) + H(+). The enzyme catalyses L-phenylalanyl-tRNA(Phe) + an N-terminal L-alpha-aminoacyl-[protein] = an N-terminal L-phenylalanyl-L-alpha-aminoacyl-[protein] + tRNA(Phe). Functions in the N-end rule pathway of protein degradation where it conjugates Leu, Phe and, less efficiently, Met from aminoacyl-tRNAs to the N-termini of proteins containing an N-terminal arginine or lysine. The chain is Leucyl/phenylalanyl-tRNA--protein transferase from Salmonella gallinarum (strain 287/91 / NCTC 13346).